We begin with the raw amino-acid sequence, 129 residues long: Small ribosomal subunit protein uS11 (129 aa).

Belongs to the universal ribosomal protein uS11 family. As to quaternary structure, part of the 30S ribosomal subunit. Interacts with proteins S7 and S18. Binds to IF-3.

Its function is as follows. Located on the platform of the 30S subunit, it bridges several disparate RNA helices of the 16S rRNA. Forms part of the Shine-Dalgarno cleft in the 70S ribosome. In Dechloromonas aromatica (strain RCB), this protein is Small ribosomal subunit protein uS11.